The following is an 81-amino-acid chain: Photosystem I iron-sulfur center (81 aa).

2 4Fe-4S ferredoxin-type domains span residues 2-31 (AHSVKIYDTCIGCTQCVRACPTDVLEMVPW) and 39-68 (IASAPRTEDCVGCKRCESACPTDYLSVRVY). [4Fe-4S] cluster is bound by residues Cys-11, Cys-14, Cys-17, Cys-21, Cys-48, Cys-51, Cys-54, and Cys-58.

The eukaryotic PSI reaction center is composed of at least 11 subunits. [4Fe-4S] cluster serves as cofactor.

It is found in the plastid. Its subcellular location is the chloroplast thylakoid membrane. The catalysed reaction is reduced [plastocyanin] + hnu + oxidized [2Fe-2S]-[ferredoxin] = oxidized [plastocyanin] + reduced [2Fe-2S]-[ferredoxin]. In terms of biological role, apoprotein for the two 4Fe-4S centers FA and FB of photosystem I (PSI); essential for photochemical activity. FB is the terminal electron acceptor of PSI, donating electrons to ferredoxin. The C-terminus interacts with PsaA/B/D and helps assemble the protein into the PSI complex. Required for binding of PsaD and PsaE to PSI. PSI is a plastocyanin-ferredoxin oxidoreductase, converting photonic excitation into a charge separation, which transfers an electron from the donor P700 chlorophyll pair to the spectroscopically characterized acceptors A0, A1, FX, FA and FB in turn. The sequence is that of Photosystem I iron-sulfur center from Gnetum gnemon (Spanish joint-fir).